Here is a 156-residue protein sequence, read N- to C-terminus: Small ribosomal subunit protein uS7 (156 aa).

Belongs to the universal ribosomal protein uS7 family. Part of the 30S ribosomal subunit. Contacts proteins S9 and S11.

In terms of biological role, one of the primary rRNA binding proteins, it binds directly to 16S rRNA where it nucleates assembly of the head domain of the 30S subunit. Is located at the subunit interface close to the decoding center, probably blocks exit of the E-site tRNA. The sequence is that of Small ribosomal subunit protein uS7 from Sphingopyxis alaskensis (strain DSM 13593 / LMG 18877 / RB2256) (Sphingomonas alaskensis).